Here is an 83-residue protein sequence, read N- to C-terminus: Protein MATERNALLY EXPRESSED GENE 3 (83 aa).

A signal peptide spans Met1–Gln22. A disulfide bond links Cys60 and Cys82.

This sequence belongs to the MEG family. In terms of tissue distribution, expressed in endosperm, anther and pollen.

The chain is Protein MATERNALLY EXPRESSED GENE 3 (MEG3) from Zea mays (Maize).